Consider the following 130-residue polypeptide: Small ribosomal subunit protein uS9 (130 aa).

The protein belongs to the universal ribosomal protein uS9 family.

This chain is Small ribosomal subunit protein uS9, found in Yersinia pseudotuberculosis serotype O:1b (strain IP 31758).